A 566-amino-acid chain; its full sequence is Proline--tRNA ligase 1 (566 aa).

It belongs to the class-II aminoacyl-tRNA synthetase family. ProS type 1 subfamily. Homodimer.

It localises to the cytoplasm. The enzyme catalyses tRNA(Pro) + L-proline + ATP = L-prolyl-tRNA(Pro) + AMP + diphosphate. Its function is as follows. Catalyzes the attachment of proline to tRNA(Pro) in a two-step reaction: proline is first activated by ATP to form Pro-AMP and then transferred to the acceptor end of tRNA(Pro). As ProRS can inadvertently accommodate and process non-cognate amino acids such as alanine and cysteine, to avoid such errors it has two additional distinct editing activities against alanine. One activity is designated as 'pretransfer' editing and involves the tRNA(Pro)-independent hydrolysis of activated Ala-AMP. The other activity is designated 'posttransfer' editing and involves deacylation of mischarged Ala-tRNA(Pro). The misacylated Cys-tRNA(Pro) is not edited by ProRS. This chain is Proline--tRNA ligase 1, found in Bacillus thuringiensis subsp. konkukian (strain 97-27).